We begin with the raw amino-acid sequence, 468 residues long: MEPVITRFPPSPTGDLHIGGARTALFNWLFARHFGGRFILRIEDTDLVRSTESSIKAILDAMEWLSLDWDEGPYYQTKRLDVYKDYLQRMVDGGAAYYCDCAPDDLERRRKSAMAEGRKPKYDGRCRDRGLGPGPDRVLRFRCPDSGTTVLNDIIKGPIFFENAELDDLVLQRSDGMPTYNFAVVVDDVTMNITHVIRGDDHVNNTPRQILIYQALGARLPYFAHVPMILGEDRARLSKRHGATSVMAYRDMGILPEALINYLVRLGWSHGDQEIFTRRELIETFSLENVGKSASVFNPEKFLWLNAHYLRERSPEALVPLLQPFLDAKGYPARSPEYVARAIPTLQPRVRTLVEMAEQMRFYLVDEVEYDPEAARKFLVSAMREPFNRLLAELAALDGFSHERLESVFQQIVSELGLKLGKVAQPVRVALTGGTVSPGLFEIIDVLGKDAVLKRLNNALRFIDRQAG.

The 'HIGH' region motif lies at Pro-10–Gly-20. Residues Cys-99, Cys-101, Cys-126, and Asp-128 each coordinate Zn(2+). The 'KMSKS' region motif lies at Arg-236–Arg-240. Lys-239 contributes to the ATP binding site.

The protein belongs to the class-I aminoacyl-tRNA synthetase family. Glutamate--tRNA ligase type 1 subfamily. As to quaternary structure, monomer. Zn(2+) serves as cofactor.

The protein localises to the cytoplasm. The catalysed reaction is tRNA(Glu) + L-glutamate + ATP = L-glutamyl-tRNA(Glu) + AMP + diphosphate. Its function is as follows. Catalyzes the attachment of glutamate to tRNA(Glu) in a two-step reaction: glutamate is first activated by ATP to form Glu-AMP and then transferred to the acceptor end of tRNA(Glu). The polypeptide is Glutamate--tRNA ligase (Syntrophobacter fumaroxidans (strain DSM 10017 / MPOB)).